Here is a 202-residue protein sequence, read N- to C-terminus: Putative scarecrow-like protein 16 (202 aa).

The segment at 1–26 (MQIPTLIDSMANKLHKKPPPLLKLTV) is VHIID. Positions 1-202 (MQIPTLIDSM…RVERLEPKSR (202 aa)) constitute a GRAS domain. The interval 45 to 82 (ELGSKLVNFATTRNVAMEFRIISSSYSDGLSSLIEQLR) is leucine repeat II (LRII). The segment at 92-184 (LVVNCHMMLH…EADISWKIDN (93 aa)) is PFYRE. The interval 187 to 202 (AKEGAERVERLEPKSR) is SAW.

The protein belongs to the GRAS family. As to expression, expressed in seedlings, leaves and flowers.

The protein localises to the nucleus. Functionally, probable transcription factor involved in plant development. In Arabidopsis thaliana (Mouse-ear cress), this protein is Putative scarecrow-like protein 16 (SCL16).